Reading from the N-terminus, the 264-residue chain is tRNA pseudouridine synthase A (264 aa).

Residue Asp-51 is the Nucleophile of the active site. Tyr-109 provides a ligand contact to substrate.

It belongs to the tRNA pseudouridine synthase TruA family. Homodimer.

The enzyme catalyses uridine(38/39/40) in tRNA = pseudouridine(38/39/40) in tRNA. Its function is as follows. Formation of pseudouridine at positions 38, 39 and 40 in the anticodon stem and loop of transfer RNAs. This chain is tRNA pseudouridine synthase A, found in Yersinia pseudotuberculosis serotype O:1b (strain IP 31758).